The following is a 373-amino-acid chain: Enoyl-[acyl-carrier-protein] reductase, mitochondrial (373 aa).

A mitochondrion-targeting transit peptide spans 1–53 (MLVSQRVTGARARAPQLAGLLEAWYRHGRTTSSYSALSEPSRVRALVYGNHGD). An N6-acetyllysine; alternate modification is found at Lys61. Lys61 is modified (N6-succinyllysine; alternate). The Proton donor role is filled by Tyr94. Residues Asn167, 193–196 (NSGV), and 216–218 (RDR) contribute to the NADP(+) site. Lys252 and Lys267 each carry N6-acetyllysine; alternate. An N6-succinyllysine; alternate mark is found at Lys252 and Lys267. Residues 285 to 288 (YGGM) and 310 to 312 (FWL) each bind NADP(+). Lys316 is modified (N6-succinyllysine). Lys368 serves as a coordination point for NADP(+).

The protein belongs to the zinc-containing alcohol dehydrogenase family. Quinone oxidoreductase subfamily. In terms of assembly, homodimer. In terms of tissue distribution, expressed in Purkinje cells (at protein level).

The protein resides in the mitochondrion. The catalysed reaction is a 2,3-saturated acyl-[ACP] + NADP(+) = a (2E)-enoyl-[ACP] + NADPH + H(+). The enzyme catalyses (2E)-butenoyl-[ACP] + NADPH + H(+) = butanoyl-[ACP] + NADP(+). It carries out the reaction (2E)-hexenoyl-[ACP] + NADPH + H(+) = hexanoyl-[ACP] + NADP(+). It catalyses the reaction (2E)-octenoyl-[ACP] + NADPH + H(+) = octanoyl-[ACP] + NADP(+). The catalysed reaction is (2E)-decenoyl-[ACP] + NADPH + H(+) = decanoyl-[ACP] + NADP(+). The enzyme catalyses (2E)-dodecenoyl-[ACP] + NADPH + H(+) = dodecanoyl-[ACP] + NADP(+). It carries out the reaction (2E)-tetradecenoyl-[ACP] + NADPH + H(+) = tetradecanoyl-[ACP] + NADP(+). It catalyses the reaction (2E)-hexadecenoyl-[ACP] + NADPH + H(+) = hexadecanoyl-[ACP] + NADP(+). In terms of biological role, catalyzes the NADPH-dependent reduction of trans-2-enoyl thioesters in mitochondrial fatty acid synthesis (fatty acid synthesis type II). Fatty acid chain elongation in mitochondria uses acyl carrier protein (ACP) as an acyl group carrier, but the enzyme accepts both ACP and CoA thioesters as substrates in vitro. Displays a preference for medium-chain over short- and long-chain substrates. May provide the octanoyl chain used for lipoic acid biosynthesis, regulating protein lipoylation and mitochondrial respiratory activity particularly in Purkinje cells. Involved in iron homeostasis; affecting Fe-S cluster assembly and ceramide metabolism. Required for proper morphology and bioenergetic functions of mitochondria. Required for maintenance of neurons. This Mus musculus (Mouse) protein is Enoyl-[acyl-carrier-protein] reductase, mitochondrial (Mecr).